The chain runs to 348 residues: S-adenosyl-L-methionine-dependent methyl transferase PigF (348 aa).

An S-adenosyl-L-methionine-binding site is contributed by glutamate 199. Histidine 247 functions as the Proton acceptor in the catalytic mechanism.

The protein belongs to the class I-like SAM-binding methyltransferase superfamily. Cation-independent O-methyltransferase family.

Its pathway is antibiotic biosynthesis; prodigiosin biosynthesis. Its function is as follows. Involved in the biosynthesis of 4-methoxy-2,2'-bipyrrole-5-carbaldehyde (MBC), one of the terminal products involved in the biosynthesis of the red antibiotic prodigiosin (Pig). Catalyzes the transfer of a methyl group from S-adenosyl-L-methionine (SAM) to the hydroxyl group of 4-hydroxy-2,2'-bipyrrole-5-carbaldehyde (HBC) to yield 4-methoxy-2,2'-bipyrrole-5-carbaldehyde (MBC). The polypeptide is S-adenosyl-L-methionine-dependent methyl transferase PigF (Serratia sp. (strain ATCC 39006) (Prodigiosinella confusarubida)).